A 124-amino-acid polypeptide reads, in one-letter code: Tax1-binding protein 3 homolog (124 aa).

The region spanning 18–106 (AVELHKQEVI…DRAVKFIKQS (89 aa)) is the PDZ domain.

Its function is as follows. May regulate a number of protein-protein interactions by competing for PDZ domain binding sites. This is Tax1-binding protein 3 homolog from Caenorhabditis elegans.